The sequence spans 419 residues: Zinc finger protein Pegasus (419 aa).

Lys5 is covalently cross-linked (Glycyl lysine isopeptide (Lys-Gly) (interchain with G-Cter in SUMO2)). Residues 36–55 (DKEAETLQGAGTDGDQNGLD) form a disordered region. C2H2-type zinc fingers lie at residues 82–104 (LKCR…IRIH), 110–132 (HRCH…MRSH), and 138–161 (YKCE…RRKH). A Glycyl lysine isopeptide (Lys-Gly) (interchain with G-Cter in SUMO2) cross-link involves residue Lys185. The segment covering 262-273 (LSSLPPENQNPA) has biased composition (polar residues). Disordered stretches follow at residues 262-284 (LSSL…PDEK) and 297-356 (VSAV…PTLP). The segment covering 297 to 311 (VSAVSASIPQSSSPT) has biased composition (low complexity). The segment covering 332–349 (SEPSAHTSTPSIGNSQPS) has biased composition (polar residues). C2H2-type zinc fingers lie at residues 364–386 (HHCQ…MGCH) and 392–416 (FQCN…RGQH).

It belongs to the Ikaros C2H2-type zinc-finger protein family. In terms of assembly, self-associates. Interacts with other family members; IKZF1, IKZF2, IKZF3 and IKZF4.

It localises to the nucleus. Its function is as follows. Transcriptional repressor that binds the core 5'GNNTGTNG-3' DNA consensus sequence. Involved in megakaryocyte differentiation. This Mus musculus (Mouse) protein is Zinc finger protein Pegasus (Ikzf5).